A 980-amino-acid polypeptide reads, in one-letter code: Alanine--tRNA ligase, mitochondrial (980 aa).

Residues 1-23 (MAVALAAAAGKLRRAIGRSCPWQ) constitute a mitochondrion transit peptide. Residues Arg-105, His-123, Trp-205, and 235–237 (LWN) contribute to the ATP site. L-alanine is bound by residues Asn-237 and Asp-260. Gly-264 provides a ligand contact to ATP. Zn(2+) contacts are provided by His-627, His-631, Cys-744, and His-748.

Belongs to the class-II aminoacyl-tRNA synthetase family. As to quaternary structure, monomer. It depends on Zn(2+) as a cofactor.

It localises to the mitochondrion. The catalysed reaction is tRNA(Ala) + L-alanine + ATP = L-alanyl-tRNA(Ala) + AMP + diphosphate. It catalyses the reaction (S)-lactate + ATP + H(+) = (S)-lactoyl-AMP + diphosphate. It carries out the reaction (S)-lactoyl-AMP + L-lysyl-[protein] = N(6)-[(S)-lactoyl]-L-lysyl-[protein] + AMP + 2 H(+). Its function is as follows. Catalyzes the attachment of alanine to tRNA(Ala) in a two-step reaction: alanine is first activated by ATP to form Ala-AMP and then transferred to the acceptor end of tRNA(Ala). Also edits incorrectly charged tRNA(Ala) via its editing domain. In presence of high levels of lactate, also acts as a protein lactyltransferase that mediates lactylation of lysine residues in target proteins, such as CGAS. Acts as an inhibitor of cGAS/STING signaling by catalyzing lactylation of CGAS, preventing the formation of liquid-like droplets in which CGAS is activated. The protein is Alanine--tRNA ligase, mitochondrial (Aars2) of Mus musculus (Mouse).